A 660-amino-acid polypeptide reads, in one-letter code: MESFSALAPDPLYPEKESERHANKLEAWGTAVLRWLSRKRRQPLWRTRRILKQVHAEAALLAGLDLAGVRARADEVAFELRCDGITQASAARAFALVRQAGKLALGKAHFDVQLLGGWAMLQGMVAEMNTGEGKTLTATLPAATAALAGLPVHVITTNDYLVERDAQIMSPLYEALGLTVRWVSMDMEPAQRRLAYQADIVYCSNKTLVFDYLRDLIVLDDDKDEDRLRLERLRGGSGRLSELFLRGLCFAIVDEADSVLVDEARTPLIISGSQKEDGGAVTGQALALAQAMQAGHYRVQPAARRVVLTEAGRAYLREACAAWPAPWSIPFRREELILSALTVLHLYKRDEQYIVRDGKVMVVDEFTGRVMPDRSWGQGVHQMIEHKEGLELSDPRVTLKSISYQRFFKHYLRLAGMTGTAAEIRGELGRVYNLPVVRIPTHRPSRRLHAPDSVYRTMAEKWSAVRERCRELHGRGVPVLIGTRSVAASEELARVLADAALPVVLLNAKQDADEASLIARAGEVGSIMIATNMAGRGTDIPLSAAARQAGGLHVILTERHESARIDRQLEGRSGRQGDPGHTEAILSLEDAVLDSVKNSLWAGPMNTLLAAQGPGWRGLAAHWLRHAQARTERKLARERRAMVSADEELENSLSFSGQGD.

ATP is bound by residues glutamine 113, 131 to 135 (GEGKT), and aspartate 539.

It belongs to the SecA family. As to quaternary structure, monomer and homodimer. Part of the essential Sec protein translocation apparatus which comprises SecA, SecYEG and auxiliary proteins SecDF-YajC and YidC.

The protein resides in the cell inner membrane. Its subcellular location is the cytoplasm. The enzyme catalyses ATP + H2O + cellular proteinSide 1 = ADP + phosphate + cellular proteinSide 2.. Functionally, part of the Sec protein translocase complex. Interacts with the SecYEG preprotein conducting channel. Has a central role in coupling the hydrolysis of ATP to the transfer of proteins into and across the cell membrane, serving both as a receptor for the preprotein-SecB complex and as an ATP-driven molecular motor driving the stepwise translocation of polypeptide chains across the membrane. This chain is Protein translocase subunit SecA 2, found in Bordetella avium (strain 197N).